The following is a 374-amino-acid chain: Chaperone protein DnaJ (374 aa).

Residues 5–70 (DYYKLLGVDR…EKRAGYDRYG (66 aa)) enclose the J domain. A CR-type zinc finger spans residues 136–214 (GIQAPIHYVT…CNGSGRRRDE (79 aa)). Positions 149, 152, 166, 169, 188, 191, 202, and 205 each coordinate Zn(2+). CXXCXGXG motif repeat units follow at residues 149-156 (CDMCQGRG), 166-173 (CHTCQGSG), 188-195 (CTTCYGEG), and 202-209 (CKKCNGSG).

The protein belongs to the DnaJ family. In terms of assembly, homodimer. Zn(2+) is required as a cofactor.

It is found in the cytoplasm. Its function is as follows. Participates actively in the response to hyperosmotic and heat shock by preventing the aggregation of stress-denatured proteins and by disaggregating proteins, also in an autonomous, DnaK-independent fashion. Unfolded proteins bind initially to DnaJ; upon interaction with the DnaJ-bound protein, DnaK hydrolyzes its bound ATP, resulting in the formation of a stable complex. GrpE releases ADP from DnaK; ATP binding to DnaK triggers the release of the substrate protein, thus completing the reaction cycle. Several rounds of ATP-dependent interactions between DnaJ, DnaK and GrpE are required for fully efficient folding. Also involved, together with DnaK and GrpE, in the DNA replication of plasmids through activation of initiation proteins. This Wolbachia sp. subsp. Brugia malayi (strain TRS) protein is Chaperone protein DnaJ.